The primary structure comprises 146 residues: Ribosome maturation factor RimP (146 aa).

Belongs to the RimP family.

The protein localises to the cytoplasm. Its function is as follows. Required for maturation of 30S ribosomal subunits. The chain is Ribosome maturation factor RimP from Helicobacter pylori (strain HPAG1).